A 171-amino-acid chain; its full sequence is Shikimate kinase (171 aa).

14–19 contacts ATP; that stretch reads GAGKST. S18 contributes to the Mg(2+) binding site. Substrate-binding residues include D36, R60, and G82. R120 lines the ATP pocket. R139 contacts substrate. Residue Q156 coordinates ATP.

This sequence belongs to the shikimate kinase family. Monomer. Mg(2+) is required as a cofactor.

Its subcellular location is the cytoplasm. It catalyses the reaction shikimate + ATP = 3-phosphoshikimate + ADP + H(+). Its pathway is metabolic intermediate biosynthesis; chorismate biosynthesis; chorismate from D-erythrose 4-phosphate and phosphoenolpyruvate: step 5/7. Functionally, catalyzes the specific phosphorylation of the 3-hydroxyl group of shikimic acid using ATP as a cosubstrate. The protein is Shikimate kinase of Alteromonas mediterranea (strain DSM 17117 / CIP 110805 / LMG 28347 / Deep ecotype).